Here is a 342-residue protein sequence, read N- to C-terminus: Protein-glutamate methylesterase/protein-glutamine glutaminase 3 (342 aa).

Residues 3-120 (RVLVVEDMPT…SPGFADDARR (118 aa)) enclose the Response regulatory domain. Residue aspartate 54 is modified to 4-aspartylphosphate. The CheB-type methylesterase domain occupies 152–342 (DVPRGRVVAV…ADRLALWLRR (191 aa)). Residues serine 164, histidine 191, and aspartate 285 contribute to the active site.

Belongs to the CheB family. In terms of processing, phosphorylated by CheA. Phosphorylation of the N-terminal regulatory domain activates the methylesterase activity.

Its subcellular location is the cytoplasm. The catalysed reaction is [protein]-L-glutamate 5-O-methyl ester + H2O = L-glutamyl-[protein] + methanol + H(+). It carries out the reaction L-glutaminyl-[protein] + H2O = L-glutamyl-[protein] + NH4(+). Its function is as follows. Involved in chemotaxis. Part of a chemotaxis signal transduction system that modulates chemotaxis in response to various stimuli. Catalyzes the demethylation of specific methylglutamate residues introduced into the chemoreceptors (methyl-accepting chemotaxis proteins or MCP) by CheR. Also mediates the irreversible deamidation of specific glutamine residues to glutamic acid. The chain is Protein-glutamate methylesterase/protein-glutamine glutaminase 3 from Anaeromyxobacter dehalogenans (strain 2CP-C).